The chain runs to 346 residues: Dihydroorotate dehydrogenase (quinone) (346 aa).

FMN-binding positions include 62-66 (AGMDK) and T86. K66 contacts substrate. 111-115 (NRMGF) provides a ligand contact to substrate. N142 and N175 together coordinate FMN. N175 is a binding site for substrate. The active-site Nucleophile is the S178. N180 contributes to the substrate binding site. Residues K211 and V239 each contribute to the FMN site. 240-241 (NT) contacts substrate. FMN-binding positions include G261, G289, and 310 to 311 (YT).

The protein belongs to the dihydroorotate dehydrogenase family. Type 2 subfamily. Monomer. The cofactor is FMN.

It localises to the cell membrane. The enzyme catalyses (S)-dihydroorotate + a quinone = orotate + a quinol. It functions in the pathway pyrimidine metabolism; UMP biosynthesis via de novo pathway; orotate from (S)-dihydroorotate (quinone route): step 1/1. Functionally, catalyzes the conversion of dihydroorotate to orotate with quinone as electron acceptor. The protein is Dihydroorotate dehydrogenase (quinone) of Thermus thermophilus (strain ATCC BAA-163 / DSM 7039 / HB27).